The primary structure comprises 226 residues: Pyridoxal 5'-phosphate synthase subunit PdxT (226 aa).

Residue 60-62 (GES) coordinates L-glutamine. The active-site Nucleophile is cysteine 92. L-glutamine-binding positions include arginine 121 and 150–151 (IR). Catalysis depends on charge relay system residues histidine 191 and glutamate 193.

This sequence belongs to the glutaminase PdxT/SNO family. In terms of assembly, in the presence of PdxS, forms a dodecamer of heterodimers. Only shows activity in the heterodimer.

The catalysed reaction is aldehydo-D-ribose 5-phosphate + D-glyceraldehyde 3-phosphate + L-glutamine = pyridoxal 5'-phosphate + L-glutamate + phosphate + 3 H2O + H(+). It catalyses the reaction L-glutamine + H2O = L-glutamate + NH4(+). It functions in the pathway cofactor biosynthesis; pyridoxal 5'-phosphate biosynthesis. Its function is as follows. Catalyzes the hydrolysis of glutamine to glutamate and ammonia as part of the biosynthesis of pyridoxal 5'-phosphate. The resulting ammonia molecule is channeled to the active site of PdxS. The sequence is that of Pyridoxal 5'-phosphate synthase subunit PdxT from Nocardia farcinica (strain IFM 10152).